The sequence spans 1064 residues: Ribosome quality control complex subunit NEMF (1064 aa).

The residue at position 7 (Thr-7) is a Phosphothreonine. Residues 296-359 (VDEFYSKIEG…LIEMNLQIVD (64 aa)) are a coiled coil. Ser-417 carries the phosphoserine modification. Residues 420-451 (EDGDGDASIENSDAEAPKGKKKKQKNKQLQKP) form a disordered region. Residues 438–447 (GKKKKQKNKQ) show a composition bias toward basic residues. The stretch at 481 to 512 (AAKKTQRTVEAAEKAFKSAEKKTKQTLKEVQT) forms a coiled coil. A compositionally biased stretch (acidic residues) spans 694–707 (EQLEGGDSSEEETE). Disordered stretches follow at residues 694–718 (EQLE…DVEL) and 731–973 (SGRD…SLTG). Basic and acidic residues predominate over residues 731–756 (SGRDELSSEDGEAKAVTKDQEPIGEM). Ser-737 is modified (phosphoserine). The span at 771 to 781 (IDLSHLQSQRP) shows a compositional bias: polar residues. Residues 828–839 (IEEKDKERESAV) show a composition bias toward basic and acidic residues. Residues 858–882 (KRGQKSKMKKMKEKYKDQDDEDREL) are a coiled coil. Residues 859–870 (RGQKSKMKKMKE) show a composition bias toward basic residues. Positions 947-959 (DDPHDDKEEHDLD) are enriched in basic and acidic residues. The span at 960 to 973 (QQGNEENLFDSLTG) shows a compositional bias: polar residues.

It belongs to the NEMF family. In terms of assembly, component of the ribosome quality control complex (RQC), composed of the E3 ubiquitin ligase LTN1, TCF25 and NEMF associated with the 60S ribosomal subunit. The complex probably also contains VCP/p97 and its ubiquitin-binding cofactors. Interacts (via its N-terminus) with XPO1.

The protein localises to the cytoplasm. It localises to the cytosol. Its subcellular location is the nucleus. In terms of biological role, key component of the ribosome quality control complex (RQC), a ribosome-associated complex that mediates the extraction of incompletely synthesized nascent chains from stalled ribosomes as well as their ubiquitin-mediated proteasomal degradation. Thereby, frees 60S subunit ribosomes from the stalled translation complex and prevents the accumulation of nascent polypeptide chains that are potentially toxic for the cell. Within the RQC complex, NEMF specifically binds stalled 60S ribosomal subunits by recognizing an exposed, nascent chain-conjugated tRNA moiety and promotes the recruitment of LTN1 to stalled 60S subunits. Following binding to stalled 60S ribosomal subunits, NEMF mediates CAT tailing by recruiting alanine-charged tRNA to the A-site and directing the elongation of stalled nascent chains independently of mRNA or 40S subunits, leading to non-templated C-terminal alanine extensions (CAT tails). Mainly recruits alanine-charged tRNAs, but can also other amino acid-charged tRNAs. CAT tailing is required to promote ubiquitination of stalled nascent chains by different E3 ubiquitin-protein ligases. In the canonical RQC pathway (RQC-L), CAT tailing facilitates LTN1-dependent ubiquitination by exposing lysine residues that would otherwise remain buried in the ribosomal exit tunnel. In the alternative RQC pathway (RQC-C) CAT tailing creates an C-degron mainly composed of alanine that is recognized by the CRL2(KLHDC10) and RCHY1/PIRH2 E3 ligases, leading to ubiquitination and degradation of stalled nascent chains. NEMF may also indirectly play a role in nuclear export. The protein is Ribosome quality control complex subunit NEMF of Mus musculus (Mouse).